The following is a 90-amino-acid chain: Small ribosomal subunit protein uS15 (90 aa).

It belongs to the universal ribosomal protein uS15 family. Part of the 30S ribosomal subunit. Forms a bridge to the 50S subunit in the 70S ribosome, contacting the 23S rRNA.

In terms of biological role, one of the primary rRNA binding proteins, it binds directly to 16S rRNA where it helps nucleate assembly of the platform of the 30S subunit by binding and bridging several RNA helices of the 16S rRNA. Functionally, forms an intersubunit bridge (bridge B4) with the 23S rRNA of the 50S subunit in the ribosome. In Campylobacter fetus subsp. fetus (strain 82-40), this protein is Small ribosomal subunit protein uS15.